The following is a 62-amino-acid chain: Photosystem II reaction center protein Z (62 aa).

A run of 2 helical transmembrane segments spans residues 8-28 (AVFA…VVFA) and 41-61 (FSGT…NSLI).

Belongs to the PsbZ family. PSII is composed of 1 copy each of membrane proteins PsbA, PsbB, PsbC, PsbD, PsbE, PsbF, PsbH, PsbI, PsbJ, PsbK, PsbL, PsbM, PsbT, PsbY, PsbZ, Psb30/Ycf12, at least 3 peripheral proteins of the oxygen-evolving complex and a large number of cofactors. It forms dimeric complexes.

The protein resides in the plastid. It is found in the chloroplast thylakoid membrane. May control the interaction of photosystem II (PSII) cores with the light-harvesting antenna, regulates electron flow through the 2 photosystem reaction centers. PSII is a light-driven water plastoquinone oxidoreductase, using light energy to abstract electrons from H(2)O, generating a proton gradient subsequently used for ATP formation. The chain is Photosystem II reaction center protein Z from Lotus japonicus (Lotus corniculatus var. japonicus).